Consider the following 344-residue polypeptide: tRNA N6-adenosine threonylcarbamoyltransferase (344 aa).

Residues His-118 and His-122 each coordinate Fe cation. Substrate is bound by residues 141–145 (TASGG), Asp-174, Gly-187, and Asn-284. Position 312 (Asp-312) interacts with Fe cation.

This sequence belongs to the KAE1 / TsaD family. Fe(2+) serves as cofactor.

It is found in the cytoplasm. The catalysed reaction is L-threonylcarbamoyladenylate + adenosine(37) in tRNA = N(6)-L-threonylcarbamoyladenosine(37) in tRNA + AMP + H(+). Its function is as follows. Required for the formation of a threonylcarbamoyl group on adenosine at position 37 (t(6)A37) in tRNAs that read codons beginning with adenine. Is involved in the transfer of the threonylcarbamoyl moiety of threonylcarbamoyl-AMP (TC-AMP) to the N6 group of A37, together with TsaE and TsaB. TsaD likely plays a direct catalytic role in this reaction. This chain is tRNA N6-adenosine threonylcarbamoyltransferase, found in Desulfotalea psychrophila (strain LSv54 / DSM 12343).